The chain runs to 90 residues: Small ribosomal subunit protein bS16 (90 aa).

This sequence belongs to the bacterial ribosomal protein bS16 family.

In Bacillus pumilus (strain SAFR-032), this protein is Small ribosomal subunit protein bS16.